The sequence spans 64 residues: MTKGTPSQGRHNKGSNHIVCRRCGRRAYHVRKKACAACGFGKSTKIKRFAWKWKKVTGKGNRLK.

Zn(2+) is bound by residues Cys-20, Cys-23, Cys-35, and Cys-38. The C4-type zinc finger occupies 20 to 38 (CRRCGRRAYHVRKKACAAC).

It belongs to the eukaryotic ribosomal protein eL37 family. Zn(2+) serves as cofactor.

Functionally, binds to the 23S rRNA. This chain is Large ribosomal subunit protein eL37, found in Methanococcus vannielii (strain ATCC 35089 / DSM 1224 / JCM 13029 / OCM 148 / SB).